The following is a 55-amino-acid chain: Protein CADMIUM TOLERANCE 1 (55 aa).

A helical transmembrane segment spans residues 24-40 (GCLYACIFTALCCFCCY).

Belongs to the CYSTM1 family.

The protein localises to the cell membrane. Its subcellular location is the secreted. It localises to the cell wall. Functionally, confers resistance to heavy metal ions (e.g. cadmium (CdCl(2)) and copper (CuCl(2))) by chelating them at the plasma membrane of root cells, thus stopping their entry and reducing their accumulation. The polypeptide is Protein CADMIUM TOLERANCE 1 (Digitaria ciliaris (Southern crabgrass)).